The following is a 300-amino-acid chain: Formamidopyrimidine-DNA glycosylase (300 aa).

The active-site Schiff-base intermediate with DNA is the Pro2. Glu3 (proton donor) is an active-site residue. Lys60 (proton donor; for beta-elimination activity) is an active-site residue. 3 residues coordinate DNA: His108, Arg136, and Arg181. The FPG-type zinc-finger motif lies at 266–300 (WVYSRAGQPCRICNTPLEKIKLAGRSTHFCPQCQK). The active-site Proton donor; for delta-elimination activity is Arg290.

It belongs to the FPG family. In terms of assembly, monomer. It depends on Zn(2+) as a cofactor.

It carries out the reaction Hydrolysis of DNA containing ring-opened 7-methylguanine residues, releasing 2,6-diamino-4-hydroxy-5-(N-methyl)formamidopyrimidine.. The catalysed reaction is 2'-deoxyribonucleotide-(2'-deoxyribose 5'-phosphate)-2'-deoxyribonucleotide-DNA = a 3'-end 2'-deoxyribonucleotide-(2,3-dehydro-2,3-deoxyribose 5'-phosphate)-DNA + a 5'-end 5'-phospho-2'-deoxyribonucleoside-DNA + H(+). In terms of biological role, involved in base excision repair of DNA damaged by oxidation or by mutagenic agents. Acts as a DNA glycosylase that recognizes and removes damaged bases. Has a preference for oxidized purines, such as 7,8-dihydro-8-oxoguanine (8-oxoG). Has AP (apurinic/apyrimidinic) lyase activity and introduces nicks in the DNA strand. Cleaves the DNA backbone by beta-delta elimination to generate a single-strand break at the site of the removed base with both 3'- and 5'-phosphates. In Trichodesmium erythraeum (strain IMS101), this protein is Formamidopyrimidine-DNA glycosylase.